A 205-amino-acid polypeptide reads, in one-letter code: High frequency lysogenization protein HflD homolog (205 aa).

This sequence belongs to the HflD family.

The protein localises to the cytoplasm. It localises to the cell inner membrane. The sequence is that of High frequency lysogenization protein HflD homolog from Shewanella sp. (strain MR-7).